Consider the following 229-residue polypeptide: Nectarin-1 (229 aa).

The first 32 residues, 1–32 (MAAFGIKSKIFQIMEMTILFLFAISIDRYCFA), serve as a signal peptide directing secretion. Cys-42 and Cys-57 are disulfide-bonded. Residue Asn-60 is glycosylated (N-linked (GlcNAc...) asparagine). The 149-residue stretch at 69–217 (FAISKPGATN…TFQINIEDVQ (149 aa)) folds into the Cupin type-1 domain. Mn(2+)-binding residues include His-117, His-119, Glu-124, and His-163.

It belongs to the germin family. As to quaternary structure, monomer. In the absence of manganese, it forms tetrameric and pentameric forms which show superoxide dismutase activity. It depends on Mn(2+) as a cofactor. Glycosylated.

Its subcellular location is the secreted. It is found in the extracellular space. The protein resides in the apoplast. The catalysed reaction is 2 superoxide + 2 H(+) = H2O2 + O2. In terms of biological role, may interact with bacterial adhesins thereby protecting the reproductive tissues from microbial attack. Has no oxalate oxidase activity. The protein is Nectarin-1 (NEC1) of Nicotiana plumbaginifolia (Leadwort-leaved tobacco).